We begin with the raw amino-acid sequence, 135 residues long: Protein cornichon homolog 1 (135 aa).

Helical transmembrane passes span 2–22 (VFVW…VIYQ), 51–71 (FVLQ…AMFL), and 111–131 (IVGL…TVLL).

The protein belongs to the cornichon family. In terms of assembly, interacts with HKT1;3.

The protein resides in the endoplasmic reticulum membrane. Its subcellular location is the golgi apparatus membrane. Acts as a cargo receptor necessary for the transportation of the cation transporter HKT1;3 and possibly other secretory proteins from the endoplasmic reticulum (ER) in COPII-coated vesicles targeted to the Golgi apparatus. The chain is Protein cornichon homolog 1 from Oryza sativa subsp. japonica (Rice).